Here is a 381-residue protein sequence, read N- to C-terminus: Subtilisin E (381 aa).

The first 29 residues, 1–29 (MRSKKLWISLLFALTLIFTMAFSNMSAQA), serve as a signal peptide directing secretion. Residues 30 to 106 (AGKSSTEKKY…VEEDHIAHEY (77 aa)) constitute a propeptide that is removed on maturation. Positions 38 to 103 (KYIVGFKQTM…VAYVEEDHIA (66 aa)) constitute an Inhibitor I9 domain. Position 108 (Q108) interacts with Ca(2+). In terms of domain architecture, Peptidase S8 spans 111-380 (PYGISQIKAP…KGLINVQAAA (270 aa)). D138 serves as the catalytic Charge relay system. D147 is a Ca(2+) binding site. The active-site Charge relay system is the H170. The Ca(2+) site is built by L181, N183, I185, V187, A275, Y277, T280, and D303. S327 acts as the Charge relay system in catalysis.

This sequence belongs to the peptidase S8 family. The cofactor is Ca(2+).

It is found in the secreted. The enzyme catalyses Hydrolysis of proteins with broad specificity for peptide bonds, and a preference for a large uncharged residue in P1. Hydrolyzes peptide amides.. With respect to regulation, inhibited by PMSF (phenylmethylsulphonyl fluoride) and 3,4-dichloroisocoumarin but not by EDTA (shown for strain RT-5). An extracellular alkaline serine protease, it catalyzes the hydrolysis of proteins and peptide amides. This Bacillus subtilis (strain 168) protein is Subtilisin E.